Here is a 734-residue protein sequence, read N- to C-terminus: Photosystem I P700 chlorophyll a apoprotein A2 (734 aa).

Helical transmembrane passes span 46 to 69 (IFASHFGHLAIIFLWVSGNLFHVA), 135 to 158 (LYQGSIFLLILSALFLFAGWLHLQ), 175 to 199 (LNHHLAGLFGFSSLAWTGHLVHVAI), 273 to 291 (IAHHHLAIAVIFIIAGHMY), 330 to 353 (LHFQLALALASLGVVTSLVAQHMY), 369 to 395 (AALYTHHQYIATFIMCGAFAHGAIFLI), 417 to 439 (AIISHLSWVSLFLGFHTLGLYVH), and 517 to 535 (FLVHHAIALGLHTTTLILV). Positions 559 and 568 each coordinate [4Fe-4S] cluster. A run of 2 helical transmembrane segments spans residues 575 to 596 (AFYLAVFWALNTVGWVTFYWHW) and 643 to 665 (LSVWSWMFLFGHLIWATGFMFLI). Residues His-654, Met-662, and Tyr-670 each coordinate chlorophyll a. Trp-671 provides a ligand contact to phylloquinone. The chain crosses the membrane as a helical span at residues 707-727 (VVGLAHFTVGYFLTYAAFLIA).

Belongs to the PsaA/PsaB family. In terms of assembly, the PsaA/B heterodimer binds the P700 chlorophyll special pair and subsequent electron acceptors. PSI consists of a core antenna complex that captures photons, and an electron transfer chain that converts photonic excitation into a charge separation. The cyanobacterial PSI reaction center is composed of one copy each of PsaA,B,C,D,E,F,I,J,K,L,M and X, and forms trimeric complexes. It depends on PSI electron transfer chain: 5 chlorophyll a, 1 chlorophyll a', 2 phylloquinones and 3 4Fe-4S clusters. PSI core antenna: 90 chlorophyll a, 22 carotenoids, 3 phospholipids and 1 galactolipid. P700 is a chlorophyll a/chlorophyll a' dimer, A0 is one or more chlorophyll a, A1 is one or both phylloquinones and FX is a shared 4Fe-4S iron-sulfur center. as a cofactor.

Its subcellular location is the cellular thylakoid membrane. It carries out the reaction reduced [plastocyanin] + hnu + oxidized [2Fe-2S]-[ferredoxin] = oxidized [plastocyanin] + reduced [2Fe-2S]-[ferredoxin]. In terms of biological role, psaA and PsaB bind P700, the primary electron donor of photosystem I (PSI), as well as the electron acceptors A0, A1 and FX. PSI is a plastocyanin/cytochrome c6-ferredoxin oxidoreductase, converting photonic excitation into a charge separation, which transfers an electron from the donor P700 chlorophyll pair to the spectroscopically characterized acceptors A0, A1, FX, FA and FB in turn. Oxidized P700 is reduced on the lumenal side of the thylakoid membrane by plastocyanin or cytochrome c6. This is Photosystem I P700 chlorophyll a apoprotein A2 from Synechococcus elongatus (strain ATCC 33912 / PCC 7942 / FACHB-805) (Anacystis nidulans R2).